Reading from the N-terminus, the 142-residue chain is uncharacterized protein (142 aa).

Residues 1–9 (MDMVSPVLN) are Cytoplasmic-facing. A helical transmembrane segment spans residues 10 to 30 (LQSSILGELVGIIGKVFFLLI). The Extracellular segment spans residues 31–41 (EEIKYPIITPK). A helical membrane pass occupies residues 42-62 (IIVDAQISSWSLFFFASICNL). Residues 63–101 (SAKFREPIVTTSSIISLMESEKDLKNVNEYFQIMAKMLF) are Cytoplasmic-facing. Residues 102 to 122 (ILENKIVVSLFVVFNISVLII) form a helical membrane-spanning segment. Topologically, residues 123-142 (VKSEPYSYGKVLFKPSSSIF) are extracellular.

The protein resides in the membrane. This is an uncharacterized protein from Saccharomyces cerevisiae (strain ATCC 204508 / S288c) (Baker's yeast).